A 484-amino-acid polypeptide reads, in one-letter code: PTS system MurNAc-GlcNAc-specific EIIBC component (484 aa).

A PTS EIIB type-1 domain is found at 5 to 87; the sequence is QQLAERIIAA…AELSGVKLGD (83 aa). C27 serves as the catalytic Phosphocysteine intermediate; for EIIB activity. The PTS EIIC type-1 domain maps to 130-484; that stretch reads KSIANIFIPL…AMRQTDLLGD (355 aa). 10 helical membrane passes run 135-155, 160-180, 200-220, 234-254, 274-294, 305-325, 349-369, 384-404, 408-428, and 450-470; these read IFIP…IAAV, MVAG…FNVI, FGAT…TGIA, LQPG…LSIV, IALL…AGFV, IISI…LPLV, LLPI…ALWV, ALPV…TLPL, FLTA…IGHI, and LGYI…TYLF.

It is found in the cell membrane. It catalyses the reaction N-acetyl-beta-D-muramate-(1-&gt;4)-N-acetyl-D-glucosamine(out) + N(pros)-phospho-L-histidyl-[protein] = 6-phospho-N-acetyl-beta-D-muramate-(1-&gt;4)-N-acetyl-D-glucosamine(in) + L-histidyl-[protein]. The protein operates within cell wall biogenesis; peptidoglycan recycling. Functionally, the phosphoenolpyruvate-dependent sugar phosphotransferase system (sugar PTS), a major carbohydrate active transport system, catalyzes the phosphorylation of incoming sugar substrates concomitantly with their translocation across the cell membrane. This system is involved in the uptake and phosphorylation of MurNAc-GlcNAc, the principle peptidoglycan turnover product of S.aureus, yielding cytoplasmic MurNAc 6P-GlcNAc. This Staphylococcus aureus (strain Mu50 / ATCC 700699) protein is PTS system MurNAc-GlcNAc-specific EIIBC component.